Consider the following 157-residue polypeptide: MFDVLIYLFETYMHNEPEMLVDQDKITDDLADAGFYREDINNALNWLEVLADLQEGQKAPYLYTADPQALRIYTVEECRRLGAACRGFILFLEQIQVLQFDTREMVIDRIMALDSPEIDLEDLKWVVLMVLFNIPGYENAYKQMEELLFEVNDGYLH.

This sequence belongs to the Smg family.

This chain is Protein Smg, found in Yersinia pseudotuberculosis serotype O:1b (strain IP 31758).